The sequence spans 173 residues: T-cell receptor beta-1 chain C region (173 aa).

The c region stretch occupies residues 1–146 (EDLRNVTPPK…GVLSATILYE (146 aa)). C31 and C71 are joined by a disulfide. N-linked (GlcNAc...) asparagine glycosylation is found at N67 and N116. A helical membrane pass occupies residues 146–167 (EILLGKATLYAVLVSTLVVMAM). Residues 168-173 (VKRKNS) lie on the Cytoplasmic side of the membrane.

The protein resides in the membrane. In Mus musculus (Mouse), this protein is T-cell receptor beta-1 chain C region.